A 254-amino-acid chain; its full sequence is Phosphoribosylaminoimidazole-succinocarboxamide synthase (254 aa).

Belongs to the SAICAR synthetase family.

It catalyses the reaction 5-amino-1-(5-phospho-D-ribosyl)imidazole-4-carboxylate + L-aspartate + ATP = (2S)-2-[5-amino-1-(5-phospho-beta-D-ribosyl)imidazole-4-carboxamido]succinate + ADP + phosphate + 2 H(+). Its pathway is purine metabolism; IMP biosynthesis via de novo pathway; 5-amino-1-(5-phospho-D-ribosyl)imidazole-4-carboxamide from 5-amino-1-(5-phospho-D-ribosyl)imidazole-4-carboxylate: step 1/2. This is Phosphoribosylaminoimidazole-succinocarboxamide synthase from Bartonella tribocorum (strain CIP 105476 / IBS 506).